The primary structure comprises 163 residues: Secretory-abundant heat soluble protein 53582 (163 aa).

Residues 1-19 form the signal peptide; the sequence is MARLFVAVALFGVVAFAAA. The tract at residues 22-51 is SAHS-c1; that stretch reads EWTGKTWLGSWASTDRAENWEAFVDALGLP. Residues 67–95 are SAHS-c2; it reads YKQGDKYHHEVSIPSKNFKKAIEYTLGTE. Residues 108-157 are SAHS-c3; that stretch reads KYTEDGEKLVADVQIPSKNKQIHDIYEVQGDTLTKTYKVGDVVAKRWFTR.

Belongs to the Secretory-abundant heat soluble protein (SAHS) family.

It is found in the secreted. In terms of biological role, secreted heat soluble protein acting as a molecular shield in water-deficient condition. Tardigrade-specific intrinsically disordered proteins (TDPs) are essential for desiccation tolerance by forming non-crystalline amorphous solids upon desiccation, and this vitrified state mirrors their protective capabilities. In Hypsibius exemplaris (Freshwater tardigrade), this protein is Secretory-abundant heat soluble protein 53582.